Reading from the N-terminus, the 940-residue chain is Beta-mannosidase A (940 aa).

The signal sequence occupies residues 1 to 21 (MHFHGIATQAVLASNITTGSG). N-linked (GlcNAc...) asparagine glycosylation is found at Asn-15, Asn-39, Asn-79, Asn-245, Asn-314, Asn-321, and Asn-344. Glu-476 serves as the catalytic Proton donor. 7 N-linked (GlcNAc...) asparagine glycosylation sites follow: Asn-534, Asn-605, Asn-626, Asn-653, Asn-733, Asn-761, and Asn-785.

It belongs to the glycosyl hydrolase 2 family. Beta-mannosidase A subfamily. In terms of assembly, homodimer.

It is found in the secreted. It carries out the reaction Hydrolysis of terminal, non-reducing beta-D-mannose residues in beta-D-mannosides.. The protein operates within glycan metabolism; N-glycan degradation. Functionally, exoglycosidase that cleaves the single beta-linked mannose residue from the non-reducing end of beta-mannosidic oligosaccharides of various complexity and length. Involved in the degradation of polymeric mannan and galactomannan. The chain is Beta-mannosidase A (mndA) from Emericella nidulans (strain FGSC A4 / ATCC 38163 / CBS 112.46 / NRRL 194 / M139) (Aspergillus nidulans).